Consider the following 270-residue polypeptide: Shikimate dehydrogenase (NADP(+)) (270 aa).

Shikimate is bound by residues 15–17 (SKS) and Thr-62. Catalysis depends on Lys-66, which acts as the Proton acceptor. Shikimate is bound by residues Asn-87 and Asp-102. Residues 127 to 131 (GAGGA), 151 to 156 (NRTVAR), and Met-214 each bind NADP(+). Tyr-216 is a shikimate binding site. Gly-238 contributes to the NADP(+) binding site.

The protein belongs to the shikimate dehydrogenase family. As to quaternary structure, homodimer.

It catalyses the reaction shikimate + NADP(+) = 3-dehydroshikimate + NADPH + H(+). Its pathway is metabolic intermediate biosynthesis; chorismate biosynthesis; chorismate from D-erythrose 4-phosphate and phosphoenolpyruvate: step 4/7. In terms of biological role, involved in the biosynthesis of the chorismate, which leads to the biosynthesis of aromatic amino acids. Catalyzes the reversible NADPH linked reduction of 3-dehydroshikimate (DHSA) to yield shikimate (SA). The chain is Shikimate dehydrogenase (NADP(+)) from Alkalilimnicola ehrlichii (strain ATCC BAA-1101 / DSM 17681 / MLHE-1).